The primary structure comprises 418 residues: Centromere protein U (418 aa).

Residues 1 to 11 (MAPRGRRRPRP) are compositionally biased toward basic residues. The interval 1-76 (MAPRGRRRPR…TYETFDPPLH (76 aa)) is disordered. The short motif at 6–23 (RRRPRPHRSEGARRSKNT) is the Nuclear localization signal element. The span at 12–42 (HRSEGARRSKNTLERTHSMKDKAGQKCKPID) shows a compositional bias: basic and acidic residues. T78 carries the phosphothreonine; by PLK1 modification. The tract at residues 88-227 (SKHCGLSLSS…KRKKSRSKAI (140 aa)) is disordered. T98 carries the post-translational modification Phosphothreonine. S108 carries the post-translational modification Phosphoserine. Phosphothreonine is present on T110. Phosphoserine occurs at positions 111, 116, and 120. The segment covering 124 to 133 (SAKKPGRKLR) has biased composition (basic residues). 3 positions are modified to phosphoserine: S136, S139, and S141. A compositionally biased stretch (basic and acidic residues) spans 145-165 (SDTRRKVKSAEKISTQRHEVI). Residues 180 to 193 (SVTSKKTGPLSAQP) are compositionally biased toward polar residues. Residue K185 forms a Glycyl lysine isopeptide (Lys-Gly) (interchain with G-Cter in SUMO2) linkage. 2 positions are modified to phosphoserine: S190 and S194. Positions 208–224 (TQKKGKISHDKRKKSRS) are enriched in basic residues. The residue at position 232 (S232) is a Phosphoserine. Coiled-coil stretches lie at residues 297 to 356 (QMLT…NAAY) and 397 to 417 (LLGA…LLDQ). The Nuclear localization signal motif lies at 303 to 320 (KRKNAKMISDIEKKRQRM).

The protein belongs to the CENP-U/AME1 family. As to quaternary structure, component of the CENPA-NAC complex, at least composed of CENPA, CENPC, CENPH, CENPM, CENPN, CENPT and CENPU. The CENPA-NAC complex interacts with the CENPA-CAD complex, composed of CENPI, CENPK, CENPL, CENPO, CENPP, CENPQ, CENPR and CENPS. Interacts with MLF1. Interacts with PLK1. In terms of assembly, (Microbial infection) Interacts with the N-terminal domain of Kaposi's sarcoma-associated herpesvirus latent nuclear antigen (LNA). Phosphorylated by PLK1 at Thr-78, creating a self-tethering site that specifically interacts with the polo-box domain of PLK1. Expressed at high levels in the testis, fetal liver, thymus, bone marrow and at lower levels in the lymph nodes, placenta, colon and spleen. Present in all cell lines examined, including B-cells, T-cells, epithelial cells and fibroblast cells. Expressed at high levels in glioblastoma cell lines.

It localises to the cytoplasm. It is found in the nucleus. The protein localises to the chromosome. Its subcellular location is the centromere. The protein resides in the kinetochore. Its function is as follows. Component of the CENPA-NAC (nucleosome-associated) complex, a complex that plays a central role in assembly of kinetochore proteins, mitotic progression and chromosome segregation. The CENPA-NAC complex recruits the CENPA-CAD (nucleosome distal) complex and may be involved in incorporation of newly synthesized CENPA into centromeres. Plays an important role in the correct PLK1 localization to the mitotic kinetochores. A scaffold protein responsible for the initial recruitment and maintenance of the kinetochore PLK1 population until its degradation. Involved in transcriptional repression. The polypeptide is Centromere protein U (CENPU) (Homo sapiens (Human)).